A 178-amino-acid chain; its full sequence is Hypoxanthine-guanine phosphoribosyltransferase (178 aa).

Diphosphate is bound by residues Lys46 and Gly47. Mg(2+) is bound at residue Asp103. Residue Asp106 is the Proton acceptor of the active site. Residues Lys134, 155-156 (FL), and Asp162 contribute to the GMP site. Arg168 contacts diphosphate.

It belongs to the purine/pyrimidine phosphoribosyltransferase family. Requires Mg(2+) as cofactor.

It localises to the cytoplasm. It carries out the reaction IMP + diphosphate = hypoxanthine + 5-phospho-alpha-D-ribose 1-diphosphate. It catalyses the reaction GMP + diphosphate = guanine + 5-phospho-alpha-D-ribose 1-diphosphate. It participates in purine metabolism; IMP biosynthesis via salvage pathway; IMP from hypoxanthine: step 1/1. The protein operates within purine metabolism; GMP biosynthesis via salvage pathway; GMP from guanine: step 1/1. Its function is as follows. Purine salvage pathway enzyme that catalyzes the transfer of the ribosyl-5-phosphate group from 5-phospho-alpha-D-ribose 1-diphosphate (PRPP) to the N9 position of the 6-oxopurines hypoxanthine and guanine to form the corresponding ribonucleotides IMP (inosine 5'-monophosphate) and GMP (guanosine 5'-monophosphate), with the release of PPi. In Aquifex aeolicus (strain VF5), this protein is Hypoxanthine-guanine phosphoribosyltransferase (hpt).